A 78-amino-acid chain; its full sequence is Large ribosomal subunit protein bL28 (78 aa).

The disordered stretch occupies residues methionine 1–alanine 21.

This sequence belongs to the bacterial ribosomal protein bL28 family.

In Photorhabdus laumondii subsp. laumondii (strain DSM 15139 / CIP 105565 / TT01) (Photorhabdus luminescens subsp. laumondii), this protein is Large ribosomal subunit protein bL28.